The following is a 283-amino-acid chain: Biotin synthase (283 aa).

In terms of domain architecture, Radical SAM core spans 3–232; the sequence is KISNEIFLCS…NTRLMIAGGR (230 aa). [4Fe-4S] cluster contacts are provided by cysteine 21, cysteine 25, and cysteine 28. [2Fe-2S] cluster-binding residues include cysteine 65, cysteine 100, and arginine 225.

Belongs to the radical SAM superfamily. Biotin synthase family. As to quaternary structure, homodimer. It depends on [4Fe-4S] cluster as a cofactor. [2Fe-2S] cluster is required as a cofactor.

It catalyses the reaction (4R,5S)-dethiobiotin + (sulfur carrier)-SH + 2 reduced [2Fe-2S]-[ferredoxin] + 2 S-adenosyl-L-methionine = (sulfur carrier)-H + biotin + 2 5'-deoxyadenosine + 2 L-methionine + 2 oxidized [2Fe-2S]-[ferredoxin]. Its pathway is cofactor biosynthesis; biotin biosynthesis; biotin from 7,8-diaminononanoate: step 2/2. Its function is as follows. Catalyzes the conversion of dethiobiotin (DTB) to biotin by the insertion of a sulfur atom into dethiobiotin via a radical-based mechanism. The polypeptide is Biotin synthase (Helicobacter hepaticus (strain ATCC 51449 / 3B1)).